Reading from the N-terminus, the 277-residue chain is Shikimate dehydrogenase (NADP(+)) (277 aa).

Shikimate contacts are provided by residues 15 to 17 (SKS) and threonine 64. The active-site Proton acceptor is lysine 68. Shikimate is bound by residues asparagine 89 and aspartate 104. NADP(+) contacts are provided by residues 129-133 (GAGGA), 153-158 (NRTAKR), and methionine 217. Shikimate is bound at residue tyrosine 219. Residue glycine 242 coordinates NADP(+).

Belongs to the shikimate dehydrogenase family. In terms of assembly, homodimer.

The enzyme catalyses shikimate + NADP(+) = 3-dehydroshikimate + NADPH + H(+). It functions in the pathway metabolic intermediate biosynthesis; chorismate biosynthesis; chorismate from D-erythrose 4-phosphate and phosphoenolpyruvate: step 4/7. Involved in the biosynthesis of the chorismate, which leads to the biosynthesis of aromatic amino acids. Catalyzes the reversible NADPH linked reduction of 3-dehydroshikimate (DHSA) to yield shikimate (SA). The polypeptide is Shikimate dehydrogenase (NADP(+)) (Hydrogenovibrio crunogenus (strain DSM 25203 / XCL-2) (Thiomicrospira crunogena)).